The chain runs to 512 residues: MFLVIGAILASALFVGLLLYHLKFKRLIDLISYMPGPPVLPLVGHGHHFIGKPPHEMVKKIFEFMETYSKDQVLKVWLGPELNVLMGNPKDVEVVLGTLRFNDKAGEYKALEPWLKEGLLVSRGRKWHKRRKIITPAFHFKILDQFVEVFEKGSRDLLRNMEQDRLKHGESGFSLYDWINLCTMDTICETAMGVSINAQSNADSEYVQAVKTISMVLHKRMFNILYRFDLTYMLTPLARAEKKALNVLHQFTEKIIVQRREELIREGSSQESSNDDADVGAKRKMAFLDILLQSTVDERPLSNLDIREEVDTFMFEGHDTTSSALMFFFYNIATHPEAQKKCFEEIRSVVGNDKSTPVSYELLNQLHYVDLCVKETLRMYPSVPLLGRKVLEDCEINGKLIPAGTNIGISPLYLGRREELFSEPNSFKPERFDVVTTAEKLNPYAYIPFSAGPRNCIGQKFAMLEIKAIVANVLRHYEVDFVGDSSEPPVLIAELILRTKEPLMFKVRERVY.

Positions 316 and 456 each coordinate heme.

It belongs to the cytochrome P450 family. Requires heme as cofactor.

It is found in the endoplasmic reticulum membrane. The protein resides in the microsome membrane. Involved in the metabolism of insect hormones and in the breakdown of synthetic insecticides. In Drosophila melanogaster (Fruit fly), this protein is Cytochrome P450 4d1 (Cyp4d1).